The sequence spans 495 residues: Probable lysine-specific demethylase 4A (495 aa).

The JmjN domain occupies 18 to 60 (IMTFRPSYEEFQNFSAYIEYIESRGAHLAGLAKIQPPAEWVPR). Residue Tyr-139 participates in 2-oxoglutarate binding. Residues 149–315 (DEDLDVWNIG…YGKRASICRC (167 aa)) form the JmjC domain. Residues His-195 and Glu-197 each contribute to the Fe cation site. Residues Asn-205 and Lys-213 each coordinate 2-oxoglutarate. Residues Cys-241 and His-247 each contribute to the Zn(2+) site. Position 248 (Lys-248) interacts with 2-oxoglutarate. Residue His-283 coordinates Fe cation. Zn(2+) contacts are provided by Cys-313 and Cys-315. A Phosphoserine modification is found at Ser-409.

It belongs to the JHDM3 histone demethylase family. Fe(2+) is required as a cofactor.

The protein localises to the nucleus. It catalyses the reaction N(6),N(6),N(6)-trimethyl-L-lysyl(9)-[histone H3] + 2 2-oxoglutarate + 2 O2 = N(6)-methyl-L-lysyl(9)-[histone H3] + 2 formaldehyde + 2 succinate + 2 CO2. The enzyme catalyses N(6),N(6),N(6)-trimethyl-L-lysyl(36)-[histone H3] + 2 2-oxoglutarate + 2 O2 = N(6)-methyl-L-lysyl(36)-[histone H3] + 2 formaldehyde + 2 succinate + 2 CO2. Its function is as follows. Probable histone demethylase that specifically demethylates 'Lys-9' and 'Lys-36' residues of histone H3, thereby playing a central role in histone code. Demethylation of Lys residue generates formaldehyde and succinate. This Drosophila melanogaster (Fruit fly) protein is Probable lysine-specific demethylase 4A (Kdm4A).